A 304-amino-acid polypeptide reads, in one-letter code: Lipid droplet-associated hydrolase (304 aa).

Residue serine 119 is the Nucleophile of the active site. Residues aspartate 250 and histidine 279 each act as charge relay system in the active site.

This sequence belongs to the AB hydrolase superfamily. LDAH family.

The protein localises to the lipid droplet. The catalysed reaction is a cholesterol ester + H2O = cholesterol + a fatty acid + H(+). Probable serine lipid hydrolase associated with lipid droplets. Has low cholesterol esterase activity. Appears to lack triglyceride lipase activity. Involved in cholesterol and triglyceride homeostasis; stimulates cellular triglyceride accumulation and cellular cholesterol release. The chain is Lipid droplet-associated hydrolase from Dictyostelium discoideum (Social amoeba).